We begin with the raw amino-acid sequence, 546 residues long: MLSKEIKFGEEARRALERGVDTLANAVKVTLGPKGRNVVLDRKFGSPTITNDGVTIARDIDLKDPWENLGCQLVKEVAIKTNDVAGDGTTTATLLAQAMIKEGLKNVAAGANPMIMRRGIDQAVKAVVDEIKTLSKPVESRDSIAQVAAISADDPEIGQLIADAMEKVGRDGVITVEESQSVGTSLEVVEGMNFDRGYISPYMITNTEKMEAVLEDPYILISDKKISSIGEVLPVLEKVVQTGKPMLLIAEEVEGEALATLVVNKLRGTFNCVAVKAPAFGERRKAMLEDIAILTNGQVASEELGVKMENVSLDMLGKARQIVIKKDETIIVDGAGSEQAIRDRSANIKRQLEETESEYDREKLQERLAKLSGGVAVIQVGAATETELKERKHRIEDALAATKAAVEEGIVSGGGVTLINAIKAIEKIEAQGDELTGINLVKKAMEEPLRQIANNAGIEGSVVVEKVKEAETGIGYNALTGVYESMIAAGIIDPAKVTRSAVQNAASISAMVLTTEAVVSELPGEDEMKGMGAGGMGGMGGMGGMM.

ATP contacts are provided by residues Thr-30–Pro-33, Asp-87–Thr-91, Gly-414, Asn-477–Leu-479, and Asp-493.

The protein belongs to the chaperonin (HSP60) family. Forms a cylinder of 14 subunits composed of two heptameric rings stacked back-to-back. Interacts with the co-chaperonin GroES.

The protein localises to the cytoplasm. It catalyses the reaction ATP + H2O + a folded polypeptide = ADP + phosphate + an unfolded polypeptide.. Its function is as follows. Together with its co-chaperonin GroES, plays an essential role in assisting protein folding. The GroEL-GroES system forms a nano-cage that allows encapsulation of the non-native substrate proteins and provides a physical environment optimized to promote and accelerate protein folding. The polypeptide is Chaperonin GroEL (Syntrophomonas wolfei subsp. wolfei (strain DSM 2245B / Goettingen)).